Reading from the N-terminus, the 337-residue chain is MNKQDFYFDLPSELIAQYPLANRSDSRLLIYNRQTEEYGHYQFREIADFLQPGDLLVMNDSKVIPARLYGHKATGGKVELLVERITGDFTFLAHIKASKSLKSNDLIYLDAGKRLEVLERQDDLFLCKASENILDLLNDLGHIPLPPYIAREDESLDKERYQTVYAKCAGSVAAPTAGLHFDDAVLSSIRARGVNIAYVTLHVGAGTFRPVRCERIQDHKMHSEWFTVSPDLCAAVKAAKSMGNRVIAVGTTALRSLESAAMGGELIPCSRDTDIFIYPGYQFKVCDGLITNFHLPESTLVMLVSAFIGHQECMALYQEAIDKRYRFFSYGDASLLL.

The protein belongs to the QueA family. Monomer.

The protein localises to the cytoplasm. The catalysed reaction is 7-aminomethyl-7-carbaguanosine(34) in tRNA + S-adenosyl-L-methionine = epoxyqueuosine(34) in tRNA + adenine + L-methionine + 2 H(+). The protein operates within tRNA modification; tRNA-queuosine biosynthesis. Transfers and isomerizes the ribose moiety from AdoMet to the 7-aminomethyl group of 7-deazaguanine (preQ1-tRNA) to give epoxyqueuosine (oQ-tRNA). In Legionella pneumophila (strain Paris), this protein is S-adenosylmethionine:tRNA ribosyltransferase-isomerase.